The following is a 144-amino-acid chain: Bacilliredoxin SH1478 (144 aa).

This sequence belongs to the bacilliredoxin family.

The protein is Bacilliredoxin SH1478 of Staphylococcus haemolyticus (strain JCSC1435).